We begin with the raw amino-acid sequence, 260 residues long: uncharacterized protein (260 aa).

The N-terminal stretch at 1 to 22 is a signal peptide; that stretch reads MGYSKRFALYISILILIVMVAG. Residue C23 is the site of N-palmitoyl cysteine attachment. C23 carries S-diacylglycerol cysteine lipidation.

The protein belongs to the staphylococcal tandem lipoprotein family.

The protein resides in the cell membrane. This is an uncharacterized protein from Staphylococcus aureus (strain N315).